Here is a 1080-residue protein sequence, read N- to C-terminus: Presequence protease 2, chloroplastic/mitochondrial (1080 aa).

The N-terminal 84 residues, 1 to 84 (MLRSLTCSST…NGQFSRLSIR (84 aa)), are a transit peptide targeting the chloroplast and mitochondrion. H161 contacts Zn(2+). E164 functions as the Proton acceptor in the catalytic mechanism. H165 is a Zn(2+) binding site. Residue E239 is part of the active site. E261 contributes to the Zn(2+) binding site. Position 704 (R704) interacts with Mg(2+).

This sequence belongs to the peptidase M16 family. PreP subfamily. In terms of assembly, homodimer. Requires Zn(2+) as cofactor. It depends on Mg(2+) as a cofactor. Expressed in leaves, flowers and roots, but not detected in siliques and shoots.

It localises to the plastid. Its subcellular location is the chloroplast stroma. The protein localises to the mitochondrion matrix. Completely inhibited by the metal chelator orthophenanthroline. Its function is as follows. ATP-independent protease that degrades both mitochondrial and chloroplastic transit peptides after their cleavage. Also degrades other unstructured peptides. Specific for peptides in the range of 10 to 65 residues. Shows a preference for cleavage after small polar residues and before basic residues, but without any positional preference. The polypeptide is Presequence protease 2, chloroplastic/mitochondrial (PREP2) (Arabidopsis thaliana (Mouse-ear cress)).